The sequence spans 512 residues: ATP synthase subunit alpha (512 aa).

169 to 176 contributes to the ATP binding site; that stretch reads GDRQTGKT.

This sequence belongs to the ATPase alpha/beta chains family. As to quaternary structure, F-type ATPases have 2 components, CF(1) - the catalytic core - and CF(0) - the membrane proton channel. CF(1) has five subunits: alpha(3), beta(3), gamma(1), delta(1), epsilon(1). CF(0) has three main subunits: a(1), b(2) and c(9-12). The alpha and beta chains form an alternating ring which encloses part of the gamma chain. CF(1) is attached to CF(0) by a central stalk formed by the gamma and epsilon chains, while a peripheral stalk is formed by the delta and b chains.

The protein localises to the cell inner membrane. It carries out the reaction ATP + H2O + 4 H(+)(in) = ADP + phosphate + 5 H(+)(out). Functionally, produces ATP from ADP in the presence of a proton gradient across the membrane. The alpha chain is a regulatory subunit. This Rickettsia akari (strain Hartford) protein is ATP synthase subunit alpha.